Consider the following 235-residue polypeptide: Chaperone protein TorD (235 aa).

Belongs to the TorD/DmsD family. TorD subfamily.

It localises to the cytoplasm. Involved in the biogenesis of TorA. Acts on TorA before the insertion of the molybdenum cofactor and, as a result, probably favors a conformation of the apoenzyme that is competent for acquiring the cofactor. The protein is Chaperone protein TorD of Shewanella amazonensis (strain ATCC BAA-1098 / SB2B).